The primary structure comprises 148 residues: Hemoglobin subunit beta-2 (148 aa).

The Globin domain maps to 3 to 148 (EWTDAERTAI…VVSALCRQYH (146 aa)). Positions 64 and 93 each coordinate heme b.

Heterotetramer of two alpha chains and two beta chains. Red blood cells.

In terms of biological role, involved in oxygen transport from gills to the various peripheral tissues. In Danio rerio (Zebrafish), this protein is Hemoglobin subunit beta-2 (ba2).